A 152-amino-acid polypeptide reads, in one-letter code: ARL14 effector protein-like (152 aa).

The segment covering 1–16 has biased composition (polar residues); it reads MTEPSQKNNSTQQELT. The tract at residues 1–27 is disordered; it reads MTEPSQKNNSTQQELTNHLFPEKSSQI.

This is ARL14 effector protein-like (Arl14epl) from Mus musculus (Mouse).